The chain runs to 581 residues: Arginine--tRNA ligase (581 aa).

Residues 126–136 (PNLAKEMHVGH) carry the 'HIGH' region motif.

This sequence belongs to the class-I aminoacyl-tRNA synthetase family. In terms of assembly, monomer.

The protein localises to the cytoplasm. The catalysed reaction is tRNA(Arg) + L-arginine + ATP = L-arginyl-tRNA(Arg) + AMP + diphosphate. The sequence is that of Arginine--tRNA ligase from Shewanella pealeana (strain ATCC 700345 / ANG-SQ1).